The primary structure comprises 78 residues: Translational regulator CsrA (78 aa).

It belongs to the CsrA/RsmA family. Homodimer; the beta-strands of each monomer intercalate to form a hydrophobic core, while the alpha-helices form wings that extend away from the core.

It localises to the cytoplasm. A translational regulator that binds mRNA to regulate translation initiation and/or mRNA stability. Usually binds in the 5'-UTR at or near the Shine-Dalgarno sequence preventing ribosome-binding, thus repressing translation. Its main target seems to be the major flagellin gene, while its function is anatagonized by FliW. This Geobacter metallireducens (strain ATCC 53774 / DSM 7210 / GS-15) protein is Translational regulator CsrA.